The following is a 413-amino-acid chain: 4-hydroxy-3-methylbut-2-en-1-yl diphosphate synthase (flavodoxin) (413 aa).

[4Fe-4S] cluster contacts are provided by C305, C308, C351, and E358.

It belongs to the IspG family. It depends on [4Fe-4S] cluster as a cofactor.

It catalyses the reaction (2E)-4-hydroxy-3-methylbut-2-enyl diphosphate + oxidized [flavodoxin] + H2O + 2 H(+) = 2-C-methyl-D-erythritol 2,4-cyclic diphosphate + reduced [flavodoxin]. It participates in isoprenoid biosynthesis; isopentenyl diphosphate biosynthesis via DXP pathway; isopentenyl diphosphate from 1-deoxy-D-xylulose 5-phosphate: step 5/6. Functionally, converts 2C-methyl-D-erythritol 2,4-cyclodiphosphate (ME-2,4cPP) into 1-hydroxy-2-methyl-2-(E)-butenyl 4-diphosphate. This chain is 4-hydroxy-3-methylbut-2-en-1-yl diphosphate synthase (flavodoxin), found in Bartonella tribocorum (strain CIP 105476 / IBS 506).